Consider the following 245-residue polypeptide: tRNA pseudouridine synthase A (245 aa).

D52 (nucleophile) is an active-site residue. A substrate-binding site is contributed by Y111.

Belongs to the tRNA pseudouridine synthase TruA family. As to quaternary structure, homodimer.

The enzyme catalyses uridine(38/39/40) in tRNA = pseudouridine(38/39/40) in tRNA. Formation of pseudouridine at positions 38, 39 and 40 in the anticodon stem and loop of transfer RNAs. The chain is tRNA pseudouridine synthase A from Bradyrhizobium sp. (strain BTAi1 / ATCC BAA-1182).